Consider the following 209-residue polypeptide: Uracil phosphoribosyltransferase (209 aa).

Residues Arg79, Arg104, and 131-139 (DPMLATGGS) contribute to the 5-phospho-alpha-D-ribose 1-diphosphate site. Uracil is bound by residues Ile194 and 199–201 (GDA). Asp200 contributes to the 5-phospho-alpha-D-ribose 1-diphosphate binding site.

Belongs to the UPRTase family. Mg(2+) is required as a cofactor.

It carries out the reaction UMP + diphosphate = 5-phospho-alpha-D-ribose 1-diphosphate + uracil. It participates in pyrimidine metabolism; UMP biosynthesis via salvage pathway; UMP from uracil: step 1/1. Allosterically activated by GTP. Its function is as follows. Catalyzes the conversion of uracil and 5-phospho-alpha-D-ribose 1-diphosphate (PRPP) to UMP and diphosphate. The sequence is that of Uracil phosphoribosyltransferase from Exiguobacterium sibiricum (strain DSM 17290 / CCUG 55495 / CIP 109462 / JCM 13490 / 255-15).